Here is a 484-residue protein sequence, read N- to C-terminus: Glutamate mutase epsilon subunit (484 aa).

R66 lines the L-glutamate pocket. G68 serves as a coordination point for adenosylcob(III)alamin. Residue R100 participates in L-glutamate binding. N123 lines the adenosylcob(III)alamin pocket. Residues 149–150 (RH), E171, and Y177 contribute to the L-glutamate site. Residue P180 participates in adenosylcob(III)alamin binding. Y181 contacts L-glutamate. Adenosylcob(III)alamin is bound by residues F297, K326, E330, and I334.

Belongs to the methylaspartate mutase GlmE subunit family. As to quaternary structure, heterotetramer composed of 2 epsilon subunits (GlmE) and 2 sigma subunits (GlmS). GlmE exists as a homodimer and GlmS as a monomer. Adenosylcob(III)alamin is required as a cofactor.

The enzyme catalyses (2S,3S)-3-methyl-L-aspartate = L-glutamate. Its pathway is amino-acid degradation; L-glutamate degradation via mesaconate pathway; acetate and pyruvate from L-glutamate: step 1/4. Catalyzes the carbon skeleton rearrangement of L-glutamate to L-threo-3-methylaspartate ((2S,3S)-3-methylaspartate). This chain is Glutamate mutase epsilon subunit, found in Desulfitobacterium hafniense (strain Y51).